The following is a 499-amino-acid chain: Cytochrome P450 705A12 (499 aa).

The helical transmembrane segment at 4–24 (LIIVDFQNISIFILLCLFSFL) threads the bilayer. Position 439 (C439) interacts with heme.

The protein belongs to the cytochrome P450 family. Heme serves as cofactor.

The protein localises to the membrane. Functionally, may be involved in hydroxylation of the triterpene marneral. The protein is Cytochrome P450 705A12 of Arabidopsis thaliana (Mouse-ear cress).